The following is a 300-amino-acid chain: Ribonuclease HIII (300 aa).

Residues 83–300 (IPIIGSDEVG…THKAQALLTK (218 aa)) enclose the RNase H type-2 domain. Residues aspartate 89, glutamate 90, and aspartate 194 each coordinate a divalent metal cation.

Belongs to the RNase HII family. RnhC subfamily. Mn(2+) is required as a cofactor. It depends on Mg(2+) as a cofactor.

The protein localises to the cytoplasm. The catalysed reaction is Endonucleolytic cleavage to 5'-phosphomonoester.. In terms of biological role, endonuclease that specifically degrades the RNA of RNA-DNA hybrids. The chain is Ribonuclease HIII from Streptococcus pyogenes serotype M28 (strain MGAS6180).